We begin with the raw amino-acid sequence, 187 residues long: UPF0301 protein ETA_28320 (187 aa).

Belongs to the UPF0301 (AlgH) family.

The chain is UPF0301 protein ETA_28320 from Erwinia tasmaniensis (strain DSM 17950 / CFBP 7177 / CIP 109463 / NCPPB 4357 / Et1/99).